A 393-amino-acid chain; its full sequence is Formate-dependent phosphoribosylglycinamide formyltransferase (393 aa).

N(1)-(5-phospho-beta-D-ribosyl)glycinamide is bound by residues 22 to 23 (EL) and Glu-82. Residues Arg-114, Lys-155, 160–165 (SSGKGQ), 195–198 (ESFV), and Glu-203 each bind ATP. The ATP-grasp domain occupies 119–308 (RLAAEEVGLK…EFALHVRAIL (190 aa)). The Mg(2+) site is built by Glu-267 and Glu-279. N(1)-(5-phospho-beta-D-ribosyl)glycinamide-binding positions include Asp-286, Lys-356, and 363–364 (RR).

It belongs to the PurK/PurT family. In terms of assembly, homodimer.

It carries out the reaction N(1)-(5-phospho-beta-D-ribosyl)glycinamide + formate + ATP = N(2)-formyl-N(1)-(5-phospho-beta-D-ribosyl)glycinamide + ADP + phosphate + H(+). The protein operates within purine metabolism; IMP biosynthesis via de novo pathway; N(2)-formyl-N(1)-(5-phospho-D-ribosyl)glycinamide from N(1)-(5-phospho-D-ribosyl)glycinamide (formate route): step 1/1. Involved in the de novo purine biosynthesis. Catalyzes the transfer of formate to 5-phospho-ribosyl-glycinamide (GAR), producing 5-phospho-ribosyl-N-formylglycinamide (FGAR). Formate is provided by PurU via hydrolysis of 10-formyl-tetrahydrofolate. The protein is Formate-dependent phosphoribosylglycinamide formyltransferase of Maridesulfovibrio salexigens (strain ATCC 14822 / DSM 2638 / NCIMB 8403 / VKM B-1763) (Desulfovibrio salexigens).